We begin with the raw amino-acid sequence, 461 residues long: A-type ATP synthase subunit B (461 aa).

Belongs to the ATPase alpha/beta chains family. As to quaternary structure, has multiple subunits with at least A(3), B(3), C, D, E, F, H, I and proteolipid K(x).

Its subcellular location is the cell membrane. Its function is as follows. Component of the A-type ATP synthase that produces ATP from ADP in the presence of a proton gradient across the membrane. The B chain is a regulatory subunit. In Nitrosopumilus maritimus (strain SCM1), this protein is A-type ATP synthase subunit B.